A 363-amino-acid chain; its full sequence is uncharacterized protein (363 aa).

Positions M1–A20 are cleaved as a signal peptide.

The protein belongs to the fimbrial protein family.

The protein resides in the fimbrium. In terms of biological role, part of the yraHIJK fimbrial operon. Could contribute to adhesion to various surfaces in specific environmental niches. Increases adhesion to eukaryotic T24 bladder epithelial cells in the absence of fim operon. This is an uncharacterized protein from Escherichia coli (strain K12).